Reading from the N-terminus, the 691-residue chain is DNA-directed RNA polymerase subunit beta' (691 aa).

C69, C71, C87, and C90 together coordinate Zn(2+). Residues D489, D491, and D493 each contribute to the Mg(2+) site.

Belongs to the RNA polymerase beta' chain family. RpoC1 subfamily. As to quaternary structure, in plastids the minimal PEP RNA polymerase catalytic core is composed of four subunits: alpha, beta, beta', and beta''. When a (nuclear-encoded) sigma factor is associated with the core the holoenzyme is formed, which can initiate transcription. Requires Mg(2+) as cofactor. The cofactor is Zn(2+).

The protein localises to the plastid. The protein resides in the chloroplast. The enzyme catalyses RNA(n) + a ribonucleoside 5'-triphosphate = RNA(n+1) + diphosphate. DNA-dependent RNA polymerase catalyzes the transcription of DNA into RNA using the four ribonucleoside triphosphates as substrates. This chain is DNA-directed RNA polymerase subunit beta', found in Jasminum nudiflorum (Winter jasmine).